Reading from the N-terminus, the 531-residue chain is Probable rhamnogalacturonate lyase A (531 aa).

A signal peptide spans 1 to 20; it reads MLSKALFFSSLPLWAKVASA. Cystine bridges form between C50-C93 and C184-C193. A glycan (N-linked (GlcNAc...) asparagine) is linked at N351.

Belongs to the polysaccharide lyase 4 family.

The protein localises to the secreted. It carries out the reaction Endotype eliminative cleavage of L-alpha-rhamnopyranosyl-(1-&gt;4)-alpha-D-galactopyranosyluronic acid bonds of rhamnogalacturonan I domains in ramified hairy regions of pectin leaving L-rhamnopyranose at the reducing end and 4-deoxy-4,5-unsaturated D-galactopyranosyluronic acid at the non-reducing end.. In terms of biological role, pectinolytic enzymes consist of four classes of enzymes: pectin lyase, polygalacturonase, pectin methylesterase and rhamnogalacturonase. Degrades the rhamnogalacturonan I (RG-I) backbone of pectin. This chain is Probable rhamnogalacturonate lyase A (rglA), found in Aspergillus terreus (strain NIH 2624 / FGSC A1156).